The chain runs to 467 residues: Glutamate--tRNA ligase (467 aa).

The short motif at 10–20 (PSPTGYLHVGG) is the 'HIGH' region element. The 'KMSKS' region motif lies at 238–242 (RLSKR). Lys241 serves as a coordination point for ATP.

The protein belongs to the class-I aminoacyl-tRNA synthetase family. Glutamate--tRNA ligase type 1 subfamily. Monomer.

Its subcellular location is the cytoplasm. The catalysed reaction is tRNA(Glu) + L-glutamate + ATP = L-glutamyl-tRNA(Glu) + AMP + diphosphate. Functionally, catalyzes the attachment of glutamate to tRNA(Glu) in a two-step reaction: glutamate is first activated by ATP to form Glu-AMP and then transferred to the acceptor end of tRNA(Glu). This is Glutamate--tRNA ligase from Citrifermentans bemidjiense (strain ATCC BAA-1014 / DSM 16622 / JCM 12645 / Bem) (Geobacter bemidjiensis).